The chain runs to 294 residues: ATP synthase gamma chain (294 aa).

Belongs to the ATPase gamma chain family. F-type ATPases have 2 components, CF(1) - the catalytic core - and CF(0) - the membrane proton channel. CF(1) has five subunits: alpha(3), beta(3), gamma(1), delta(1), epsilon(1). CF(0) has three main subunits: a, b and c.

Its subcellular location is the cell inner membrane. Functionally, produces ATP from ADP in the presence of a proton gradient across the membrane. The gamma chain is believed to be important in regulating ATPase activity and the flow of protons through the CF(0) complex. This Rhizobium leguminosarum bv. trifolii (strain WSM2304) protein is ATP synthase gamma chain.